Here is a 365-residue protein sequence, read N- to C-terminus: Cobalt-precorrin-5B C(1)-methyltransferase (365 aa).

Belongs to the CbiD family.

The enzyme catalyses Co-precorrin-5B + S-adenosyl-L-methionine = Co-precorrin-6A + S-adenosyl-L-homocysteine. It participates in cofactor biosynthesis; adenosylcobalamin biosynthesis; cob(II)yrinate a,c-diamide from sirohydrochlorin (anaerobic route): step 6/10. In terms of biological role, catalyzes the methylation of C-1 in cobalt-precorrin-5B to form cobalt-precorrin-6A. The sequence is that of Cobalt-precorrin-5B C(1)-methyltransferase from Polaromonas naphthalenivorans (strain CJ2).